Consider the following 662-residue polypeptide: Putative cysteine-rich receptor-like protein kinase 16 (662 aa).

An N-terminal signal peptide occupies residues Met1–Ala26. Gnk2-homologous domains are found at residues Gln27–Phe131 and Met137–Phe244. Residues Gln27–Asn277 lie on the Extracellular side of the membrane. Residues Asn55, Asn64, Asn106, Asn128, Asn145, Asn152, and Asn206 are each glycosylated (N-linked (GlcNAc...) asparagine). Residues Ile278–Ala298 traverse the membrane as a helical segment. Topologically, residues Leu299–Arg662 are cytoplasmic. Positions Phe335–Leu612 constitute a Protein kinase domain. ATP-binding positions include Leu341–Val349 and Lys363. The active-site Proton acceptor is the Asp460.

It belongs to the protein kinase superfamily. Ser/Thr protein kinase family. CRK subfamily.

Its subcellular location is the membrane. It carries out the reaction L-seryl-[protein] + ATP = O-phospho-L-seryl-[protein] + ADP + H(+). The enzyme catalyses L-threonyl-[protein] + ATP = O-phospho-L-threonyl-[protein] + ADP + H(+). The protein is Putative cysteine-rich receptor-like protein kinase 16 (CRK16) of Arabidopsis thaliana (Mouse-ear cress).